Here is a 264-residue protein sequence, read N- to C-terminus: S-adenosylmethionine decarboxylase proenzyme (264 aa).

Residue Ser-113 is the Schiff-base intermediate with substrate; via pyruvic acid of the active site. Residue Ser-113 is modified to Pyruvic acid (Ser); by autocatalysis. The Proton acceptor; for processing activity role is filled by His-118. Catalysis depends on Cys-141, which acts as the Proton donor; for catalytic activity.

It belongs to the prokaryotic AdoMetDC family. Type 2 subfamily. As to quaternary structure, heterooctamer of four alpha and four beta chains arranged as a tetramer of alpha/beta heterodimers. Pyruvate serves as cofactor. Post-translationally, is synthesized initially as an inactive proenzyme. Formation of the active enzyme involves a self-maturation process in which the active site pyruvoyl group is generated from an internal serine residue via an autocatalytic post-translational modification. Two non-identical subunits are generated from the proenzyme in this reaction, and the pyruvate is formed at the N-terminus of the alpha chain, which is derived from the carboxyl end of the proenzyme. The post-translation cleavage follows an unusual pathway, termed non-hydrolytic serinolysis, in which the side chain hydroxyl group of the serine supplies its oxygen atom to form the C-terminus of the beta chain, while the remainder of the serine residue undergoes an oxidative deamination to produce ammonia and the pyruvoyl group blocking the N-terminus of the alpha chain.

The catalysed reaction is S-adenosyl-L-methionine + H(+) = S-adenosyl 3-(methylsulfanyl)propylamine + CO2. Its pathway is amine and polyamine biosynthesis; S-adenosylmethioninamine biosynthesis; S-adenosylmethioninamine from S-adenosyl-L-methionine: step 1/1. Its function is as follows. Catalyzes the decarboxylation of S-adenosylmethionine to S-adenosylmethioninamine (dcAdoMet), the propylamine donor required for the synthesis of the polyamines spermine and spermidine from the diamine putrescine. This is S-adenosylmethionine decarboxylase proenzyme from Xanthomonas euvesicatoria pv. vesicatoria (strain 85-10) (Xanthomonas campestris pv. vesicatoria).